A 1050-amino-acid chain; its full sequence is Probable efflux pump membrane transporter TtgB (1050 aa).

12 helical membrane-spanning segments follow: residues 10–30 (IFAW…ILKL), 339–359 (GVIH…YLFL), 370–390 (MTVP…GFSI), 393–413 (LTMF…IVVV), 440–460 (GALV…AFFG), 472–492 (ITIV…TPAL), 539–559 (VPFL…FARI), 871–891 (MPAL…ALYE), 893–913 (WSIP…ALIA), 923–943 (VYFL…AILI), 972–992 (IIMT…ASGA), and 1004–1024 (VIGG…LFFV).

It belongs to the resistance-nodulation-cell division (RND) (TC 2.A.6) family.

Its subcellular location is the cell inner membrane. Probable membrane transporter component of the TtgABC efflux pump with unknown specificity. This is Probable efflux pump membrane transporter TtgB (ttgB) from Pseudomonas putida (strain ATCC 47054 / DSM 6125 / CFBP 8728 / NCIMB 11950 / KT2440).